Consider the following 393-residue polypeptide: Formate-dependent phosphoribosylglycinamide formyltransferase (393 aa).

N(1)-(5-phospho-beta-D-ribosyl)glycinamide is bound by residues 22 to 23 and glutamate 82; that span reads EL. Residues arginine 114, lysine 155, 160–165, 195–198, and glutamate 203 contribute to the ATP site; these read SSGHGQ and EGFV. The ATP-grasp domain maps to 119-308; it reads RLAAEELGLP…QFALHARAVL (190 aa). Mg(2+)-binding residues include glutamate 267 and glutamate 279. N(1)-(5-phospho-beta-D-ribosyl)glycinamide contacts are provided by residues aspartate 286, lysine 356, and 363–364; that span reads RR.

The protein belongs to the PurK/PurT family. As to quaternary structure, homodimer.

It catalyses the reaction N(1)-(5-phospho-beta-D-ribosyl)glycinamide + formate + ATP = N(2)-formyl-N(1)-(5-phospho-beta-D-ribosyl)glycinamide + ADP + phosphate + H(+). The protein operates within purine metabolism; IMP biosynthesis via de novo pathway; N(2)-formyl-N(1)-(5-phospho-D-ribosyl)glycinamide from N(1)-(5-phospho-D-ribosyl)glycinamide (formate route): step 1/1. Involved in the de novo purine biosynthesis. Catalyzes the transfer of formate to 5-phospho-ribosyl-glycinamide (GAR), producing 5-phospho-ribosyl-N-formylglycinamide (FGAR). Formate is provided by PurU via hydrolysis of 10-formyl-tetrahydrofolate. In Parabacteroides distasonis (strain ATCC 8503 / DSM 20701 / CIP 104284 / JCM 5825 / NCTC 11152), this protein is Formate-dependent phosphoribosylglycinamide formyltransferase.